Reading from the N-terminus, the 207-residue chain is Large ribosomal subunit protein uL4 (207 aa).

Positions 43-85 (SRRQGTHDTKGRSEVRGGGRKPWKQKGTGRARQGSIRSPQWVG) are disordered. A compositionally biased stretch (basic and acidic residues) spans 47–59 (GTHDTKGRSEVRG). Positions 60 to 71 (GGRKPWKQKGTG) are enriched in basic residues.

It belongs to the universal ribosomal protein uL4 family. Part of the 50S ribosomal subunit.

Its function is as follows. One of the primary rRNA binding proteins, this protein initially binds near the 5'-end of the 23S rRNA. It is important during the early stages of 50S assembly. It makes multiple contacts with different domains of the 23S rRNA in the assembled 50S subunit and ribosome. Functionally, forms part of the polypeptide exit tunnel. This chain is Large ribosomal subunit protein uL4, found in Exiguobacterium sibiricum (strain DSM 17290 / CCUG 55495 / CIP 109462 / JCM 13490 / 255-15).